A 147-amino-acid chain; its full sequence is Large ribosomal subunit protein uL15 (147 aa).

Positions 1–45 (MRLEDLRPTPGAMKKRKRVGRGPGSGHGKTSGRGHKGQKARGSGK) are disordered. The span at 30–44 (TSGRGHKGQKARGSG) shows a compositional bias: basic residues.

This sequence belongs to the universal ribosomal protein uL15 family. As to quaternary structure, part of the 50S ribosomal subunit.

Binds to the 23S rRNA. In Thermotoga sp. (strain RQ2), this protein is Large ribosomal subunit protein uL15.